A 491-amino-acid polypeptide reads, in one-letter code: [Pyruvate dehydrogenase (acetyl-transferring)] kinase 2, mitochondrial (491 aa).

A Histidine kinase domain is found at 153-480; sequence PTIRTLEDAS…DVVLKLGNLM (328 aa). Residues 300-307, D341, 359-360, and 383-446 contribute to the ATP site; these read EILRNTYE, SK, and DEVH…GIGL.

Belongs to the PDK/BCKDK protein kinase family. As to quaternary structure, interacts with PKP1.

The protein localises to the mitochondrion matrix. It carries out the reaction L-seryl-[pyruvate dehydrogenase E1 alpha subunit] + ATP = O-phospho-L-seryl-[pyruvate dehydrogenase E1 alpha subunit] + ADP + H(+). Its function is as follows. Inhibits the mitochondrial pyruvate dehydrogenase complex by phosphorylation of the E1 alpha subunit (PDA1), thus contributing to the regulation of glucose metabolism. In Saccharomyces cerevisiae (strain ATCC 204508 / S288c) (Baker's yeast), this protein is [Pyruvate dehydrogenase (acetyl-transferring)] kinase 2, mitochondrial.